A 159-amino-acid chain; its full sequence is Cyclic pyranopterin monophosphate synthase (159 aa).

Residues 75–77 (LCH) and 113–114 (ME) each bind substrate. Asp128 is an active-site residue.

The protein belongs to the MoaC family. Homohexamer; trimer of dimers.

The catalysed reaction is (8S)-3',8-cyclo-7,8-dihydroguanosine 5'-triphosphate = cyclic pyranopterin phosphate + diphosphate. It functions in the pathway cofactor biosynthesis; molybdopterin biosynthesis. In terms of biological role, catalyzes the conversion of (8S)-3',8-cyclo-7,8-dihydroguanosine 5'-triphosphate to cyclic pyranopterin monophosphate (cPMP). The sequence is that of Cyclic pyranopterin monophosphate synthase from Thiobacillus denitrificans (strain ATCC 25259 / T1).